The chain runs to 148 residues: Small ribosomal subunit protein uS15 (148 aa).

Positions 1 to 14 are enriched in basic residues; it reads MGRLHSHRHGKSHS. Residues 1–27 are disordered; it reads MGRLHSHRHGKSHSIRPSSPKAPSWIQ.

Belongs to the universal ribosomal protein uS15 family. Part of the 30S ribosomal subunit.

In Cenarchaeum symbiosum (strain A), this protein is Small ribosomal subunit protein uS15.